Reading from the N-terminus, the 242-residue chain is MPGAVSATPPPELATAARTLFGDRLSLAVAYAGLLVTDGVVRGLIGPREAPRIWDRHLLNCAAVAERIPLGSTVLDVGSGAGLPGLVLAVARPDLSVTLVEPLARRTAFLVEAVAQLDLAASVQVVRGRAEEIASGGGGVEPLTGDVVTARAVAPLDRLARWCLPLAVPGGRLVALKGASAVEEVAEHAAIVDRLGGGRPEVHHCGAGVVEPPTTVIEIARERVVAPARPKPAKRSRGGRRR.

S-adenosyl-L-methionine is bound by residues glycine 78, leucine 83, 130 to 131, and arginine 151; that span reads AE.

It belongs to the methyltransferase superfamily. RNA methyltransferase RsmG family.

It is found in the cytoplasm. Specifically methylates the N7 position of guanine in position 518 of 16S rRNA. In Salinispora tropica (strain ATCC BAA-916 / DSM 44818 / JCM 13857 / NBRC 105044 / CNB-440), this protein is Ribosomal RNA small subunit methyltransferase G.